The following is a 572-amino-acid chain: MDNLVLCEANNVPLTPITFLKRASECYPNRTSIIYGQTRFTWPQTYDRCCRLAASLLSLNITRNDVVSILAPNVPAMYEMHFSVPMTGAVLNPINTRLDAKTIAIILRHAEPKILFVDYEFAPLIQEVLRLIPTYQSQPHPRIILINEIDSTTKPFSKELDYEGLIRKGEPTPSSSASMFRVHNEHDPISLNYTSGTTADPKGVVISHQGAYLSALSSIIGWEMGIFPVYLWTLPMFHCNGWTHTWSVAARGGTNVCIRHVTAPEIYKNIELHGVTHMSCVPTVFRFLLEGSRTDQSPKSSPVQVLTGGSSPPAVLIKKVEQLGFHVMHGYGLTEATGPVLFCEWQDEWNKLPEHQQIELQQRQGVRNLTLADVDVKNTKTLESVPRDGKTMGEIVIKGSSLMKGYLKNPKATSEAFKHGWLNTGDIGVIHPDGYVEIKDRSKDIIISGGENISSIEVEKVLYMYQEVLEAAVVAMPHPLWGETPCAFVVLKKGEEGLVTSEGDLIKYCRENMPHFMCPKKVVFFQELPKNSNGKILKSKLRDIAKALVVREDDAGSKKVHQRSIEHVSSRL.

A Microbody targeting signal motif is present at residues 570–572 (SRL).

The protein belongs to the ATP-dependent AMP-binding enzyme family. Expressed in flowers.

The protein localises to the peroxisome. The catalysed reaction is a medium-chain fatty acid + ATP + CoA = a medium-chain fatty acyl-CoA + AMP + diphosphate. Butyrate--CoA ligase that is active in vitro with medium-chain fatty acids, with a preference for hexanoate and octanoate. The chain is Butyrate--CoA ligase AAE11, peroxisomal (AAE11) from Arabidopsis thaliana (Mouse-ear cress).